A 492-amino-acid chain; its full sequence is Aspartyl/glutamyl-tRNA(Asn/Gln) amidotransferase subunit B (492 aa).

This sequence belongs to the GatB/GatE family. GatB subfamily. Heterotrimer of A, B and C subunits.

It carries out the reaction L-glutamyl-tRNA(Gln) + L-glutamine + ATP + H2O = L-glutaminyl-tRNA(Gln) + L-glutamate + ADP + phosphate + H(+). It catalyses the reaction L-aspartyl-tRNA(Asn) + L-glutamine + ATP + H2O = L-asparaginyl-tRNA(Asn) + L-glutamate + ADP + phosphate + 2 H(+). Allows the formation of correctly charged Asn-tRNA(Asn) or Gln-tRNA(Gln) through the transamidation of misacylated Asp-tRNA(Asn) or Glu-tRNA(Gln) in organisms which lack either or both of asparaginyl-tRNA or glutaminyl-tRNA synthetases. The reaction takes place in the presence of glutamine and ATP through an activated phospho-Asp-tRNA(Asn) or phospho-Glu-tRNA(Gln). The sequence is that of Aspartyl/glutamyl-tRNA(Asn/Gln) amidotransferase subunit B from Dehalococcoides mccartyi (strain CBDB1).